The primary structure comprises 375 residues: Chaperone protein DnaJ (375 aa).

The region spanning 5–70 (DFYETLGVAK…QKRAAYDRYG (66 aa)) is the J domain. The CR-type zinc-finger motif lies at 136-214 (GKTAQIRVPT…CHGQGRVTEE (79 aa)). Zn(2+) contacts are provided by Cys-149, Cys-152, Cys-166, Cys-169, Cys-188, Cys-191, Cys-202, and Cys-205. CXXCXGXG motif repeat units follow at residues 149-156 (CDVCSGSG), 166-173 (CGTCQGSG), 188-195 (CPTCHGRG), and 202-209 (CPKCHGQG).

The protein belongs to the DnaJ family. As to quaternary structure, homodimer. The cofactor is Zn(2+).

It localises to the cytoplasm. In terms of biological role, participates actively in the response to hyperosmotic and heat shock by preventing the aggregation of stress-denatured proteins and by disaggregating proteins, also in an autonomous, DnaK-independent fashion. Unfolded proteins bind initially to DnaJ; upon interaction with the DnaJ-bound protein, DnaK hydrolyzes its bound ATP, resulting in the formation of a stable complex. GrpE releases ADP from DnaK; ATP binding to DnaK triggers the release of the substrate protein, thus completing the reaction cycle. Several rounds of ATP-dependent interactions between DnaJ, DnaK and GrpE are required for fully efficient folding. Also involved, together with DnaK and GrpE, in the DNA replication of plasmids through activation of initiation proteins. The protein is Chaperone protein DnaJ of Rhizobium etli (strain CIAT 652).